A 487-amino-acid chain; its full sequence is Solute carrier family 22 member 15-like (487 aa).

The helical transmembrane segment at Ala-22–Gly-42 threads the bilayer. N-linked (GlcNAc...) asparagine glycosylation occurs at Asn-70. The next 11 helical transmembrane spans lie at Leu-90–Ser-110, Pro-117–Pro-137, Val-141–Phe-161, Ser-178–Ile-198, Thr-203–Pro-223, Ile-286–Ala-306, Leu-315–Ile-335, Ala-345–Glu-365, Thr-374–Tyr-394, Ala-406–Pro-426, and Met-435–Pro-455.

It belongs to the major facilitator (TC 2.A.1) superfamily. Organic cation transporter (TC 2.A.1.19) family.

It localises to the membrane. Probably transports organic cations. This is Solute carrier family 22 member 15-like (slc22a15b) from Xenopus tropicalis (Western clawed frog).